Consider the following 730-residue polypeptide: Translation initiation factor IF-2 (730 aa).

A disordered region spans residues 48 to 151 (GNGNQKQGGS…NKAKPLPEKV (104 aa)). Basic and acidic residues-rich tracts occupy residues 61–77 (EQQKKAGEKKPAQDHGQ) and 89–104 (NQHDRSQGSDQQKGKA). A compositionally biased stretch (basic residues) spans 110–123 (KPKHKGNKNKKQHQ). The span at 137–148 (RQPEMNKAKPLP) shows a compositional bias: basic and acidic residues. The tr-type G domain occupies 231-400 (ERPPVVTIMG…LLVAEVEELK (170 aa)). The tract at residues 240 to 247 (GHVDHGKT) is G1. Residue 240-247 (GHVDHGKT) participates in GTP binding. The segment at 265–269 (GITQH) is G2. The interval 286 to 289 (DTPG) is G3. Residues 286-290 (DTPGH) and 340-343 (NKMD) each bind GTP. Positions 340–343 (NKMD) are G4. The tract at residues 376–378 (SAL) is G5.

This sequence belongs to the TRAFAC class translation factor GTPase superfamily. Classic translation factor GTPase family. IF-2 subfamily.

Its subcellular location is the cytoplasm. In terms of biological role, one of the essential components for the initiation of protein synthesis. Protects formylmethionyl-tRNA from spontaneous hydrolysis and promotes its binding to the 30S ribosomal subunits. Also involved in the hydrolysis of GTP during the formation of the 70S ribosomal complex. This Halalkalibacterium halodurans (strain ATCC BAA-125 / DSM 18197 / FERM 7344 / JCM 9153 / C-125) (Bacillus halodurans) protein is Translation initiation factor IF-2.